Consider the following 380-residue polypeptide: Chaperone protein DnaJ (380 aa).

Residues 5–70 (DYYEILGVTK…QKRAAYDRFG (66 aa)) enclose the J domain. A CR-type zinc finger spans residues 137-215 (GKAETIKIPT…CQGAGRVNRE (79 aa)). Residues cysteine 150, cysteine 153, cysteine 167, cysteine 170, cysteine 189, cysteine 192, cysteine 203, and cysteine 206 each contribute to the Zn(2+) site. CXXCXGXG motif repeat units follow at residues 150–157 (CEVCDGSG), 167–174 (CPTCAGYG), 189–196 (CPNCHGRG), and 203–210 (CTACQGAG).

This sequence belongs to the DnaJ family. Homodimer. Zn(2+) is required as a cofactor.

Its subcellular location is the cytoplasm. In terms of biological role, participates actively in the response to hyperosmotic and heat shock by preventing the aggregation of stress-denatured proteins and by disaggregating proteins, also in an autonomous, DnaK-independent fashion. Unfolded proteins bind initially to DnaJ; upon interaction with the DnaJ-bound protein, DnaK hydrolyzes its bound ATP, resulting in the formation of a stable complex. GrpE releases ADP from DnaK; ATP binding to DnaK triggers the release of the substrate protein, thus completing the reaction cycle. Several rounds of ATP-dependent interactions between DnaJ, DnaK and GrpE are required for fully efficient folding. Also involved, together with DnaK and GrpE, in the DNA replication of plasmids through activation of initiation proteins. This chain is Chaperone protein DnaJ, found in Methylobacterium radiotolerans (strain ATCC 27329 / DSM 1819 / JCM 2831 / NBRC 15690 / NCIMB 10815 / 0-1).